The primary structure comprises 302 residues: Deoxyhypusine hydroxylase (302 aa).

HEAT-like PBS-type repeat units lie at residues 23 to 49 (ERFRALFTLKNIGGKTAIDAISKAFDD), 54 to 80 (LKHELAYCLGQMQDPTALEILTKVLKD), 87 to 113 (VRHEAAEAMGAIGHADVLAILEEYKKD), 175 to 201 (DRYRAMFSLRNLCTEESVLAIAEGLKD), 206 to 232 (FRHEVAFVLGQLQEPCSIPYLQENLED), and 239 to 265 (VRHECAEALGAIATDDCIQILTRYADD). Residues H56, E57, H89, and E90 each contribute to the Fe cation site. Residues H208, E209, H241, and E242 each contribute to the Fe cation site.

Belongs to the deoxyhypusine hydroxylase family. Fe(2+) serves as cofactor.

It is found in the endoplasmic reticulum membrane. The catalysed reaction is [eIF5A protein]-deoxyhypusine + AH2 + O2 = [eIF5A protein]-hypusine + A + H2O. It functions in the pathway protein modification; eIF5A hypusination. In terms of biological role, catalyzes the hydroxylation of the N(6)-(4-aminobutyl)-L-lysine intermediate to form hypusine, an essential post-translational modification only found in mature eIF-5A factor. Essential for organismal viability and plays a role in a wide number of important processes such as cell growth and proliferation, and regulates induction of autophagy and protein synthesis. Has a role in eIF-5A-mediated translational control. The protein is Deoxyhypusine hydroxylase of Drosophila pseudoobscura pseudoobscura (Fruit fly).